A 104-amino-acid polypeptide reads, in one-letter code: Intracellular chorismate mutase (104 aa).

A Chorismate mutase domain is found at 23–104; the sequence is AVPEIDDLRR…LRLGRGRLGY (82 aa). The chorismate site is built by Arg59, Val68, and Glu72.

As to quaternary structure, homodimer. Probably interacts with AroG (MSMEG_4244).

It localises to the cytoplasm. It catalyses the reaction chorismate = prephenate. It participates in metabolic intermediate biosynthesis; prephenate biosynthesis; prephenate from chorismate: step 1/1. Its activity is regulated as follows. The formation of the complex with AroG activates the chorismate mutase activity. Functionally, catalyzes the Claisen rearrangement of chorismate to prephenate. Probably involved in the aromatic amino acid biosynthesis. This Mycolicibacterium smegmatis (strain ATCC 700084 / mc(2)155) (Mycobacterium smegmatis) protein is Intracellular chorismate mutase.